Here is a 197-residue protein sequence, read N- to C-terminus: Large ribosomal subunit protein uL13A (197 aa).

Position 151 is a phosphoserine (S151).

This sequence belongs to the universal ribosomal protein uL13 family. As to quaternary structure, component of the large ribosomal subunit (LSU). Mature yeast ribosomes consist of a small (40S) and a large (60S) subunit. The 40S small subunit contains 1 molecule of ribosomal RNA (18S rRNA) and at least 33 different proteins. The large 60S subunit contains 3 rRNA molecules (25S, 5.8S and 5S rRNA) and at least 46 different proteins.

Its subcellular location is the cytoplasm. It localises to the nucleus. It is found in the nucleolus. In terms of biological role, component of the ribosome, a large ribonucleoprotein complex responsible for the synthesis of proteins in the cell. The small ribosomal subunit (SSU) binds messenger RNAs (mRNAs) and translates the encoded message by selecting cognate aminoacyl-transfer RNA (tRNA) molecules. The large subunit (LSU) contains the ribosomal catalytic site termed the peptidyl transferase center (PTC), which catalyzes the formation of peptide bonds, thereby polymerizing the amino acids delivered by tRNAs into a polypeptide chain. The nascent polypeptides leave the ribosome through a tunnel in the LSU and interact with protein factors that function in enzymatic processing, targeting, and the membrane insertion of nascent chains at the exit of the ribosomal tunnel. The sequence is that of Large ribosomal subunit protein uL13A (rpl1602) from Schizosaccharomyces pombe (strain 972 / ATCC 24843) (Fission yeast).